The sequence spans 165 residues: Shikimate kinase (165 aa).

11–16 is an ATP binding site; it reads GAGKTT. Thr15 contributes to the Mg(2+) binding site. 3 residues coordinate substrate: Asp33, Arg57, and Gly78. Residue Arg116 participates in ATP binding. Arg134 serves as a coordination point for substrate.

The protein belongs to the shikimate kinase family. As to quaternary structure, monomer. It depends on Mg(2+) as a cofactor.

The protein resides in the cytoplasm. It carries out the reaction shikimate + ATP = 3-phosphoshikimate + ADP + H(+). It functions in the pathway metabolic intermediate biosynthesis; chorismate biosynthesis; chorismate from D-erythrose 4-phosphate and phosphoenolpyruvate: step 5/7. Its function is as follows. Catalyzes the specific phosphorylation of the 3-hydroxyl group of shikimic acid using ATP as a cosubstrate. This chain is Shikimate kinase, found in Bacillus mycoides (strain KBAB4) (Bacillus weihenstephanensis).